The primary structure comprises 311 residues: Ciliary microtubule inner protein 2B (311 aa).

Disordered stretches follow at residues 64 to 93 and 150 to 183; these read PFPP…LGDP and QEGR…APFM.

The protein belongs to the CIMIP2 family. Expressed in airway epithelial cells.

It is found in the cytoplasm. The protein localises to the cytoskeleton. It localises to the cilium axoneme. Microtubule inner protein (MIP) part of the dynein-decorated doublet microtubules (DMTs) in cilia axoneme, which is required for motile cilia beating. The polypeptide is Ciliary microtubule inner protein 2B (cimip2b) (Xenopus laevis (African clawed frog)).